A 466-amino-acid chain; its full sequence is Ribosome biogenesis protein YTM1 (466 aa).

Residues 11-99 (IKIKFFTNEE…EAFLTLEYTR (89 aa)) form a ubiquitin-like (UBL) domain region. A sufficient for interaction with ERB1 and association with 66S pre-ribosomes region spans residues 109–466 (SFNNDDWISS…QINKGSDIAK (358 aa)). WD repeat units follow at residues 124–163 (PTTK…EKQY), 165–203 (GHSA…IIDE), 219–258 (GHKA…MTSI), 296–336 (GHSE…CVDT), 338–377 (TTGY…TSDQ), 384–424 (GHTN…SLYT), and 431–466 (STNA…DIAK).

The protein belongs to the WD repeat WDR12/YTM1 family. Component of the NOP7 complex, composed of ERB1, NOP7 and YTM1. The complex is held together by ERB1, which interacts with NOP7 via its N-terminal domain and with YTM1 via a high-affinity interaction between the seven-bladed beta-propeller domains of the 2 proteins. The NOP7 complex associates with the 66S pre-ribosome. Interacts (via UBL domain) with MDN1 (via VWFA/MIDAS domain).

The protein resides in the nucleus. Its subcellular location is the nucleolus. The protein localises to the nucleoplasm. Component of the NOP7 complex, which is required for maturation of the 25S and 5.8S ribosomal RNAs and formation of the 60S ribosome. The chain is Ribosome biogenesis protein YTM1 from Candida albicans (strain SC5314 / ATCC MYA-2876) (Yeast).